A 372-amino-acid polypeptide reads, in one-letter code: 4-hydroxy-3-methylbut-2-en-1-yl diphosphate synthase (flavodoxin) (372 aa).

Cys-270, Cys-273, Cys-305, and Glu-312 together coordinate [4Fe-4S] cluster.

The protein belongs to the IspG family. It depends on [4Fe-4S] cluster as a cofactor.

The catalysed reaction is (2E)-4-hydroxy-3-methylbut-2-enyl diphosphate + oxidized [flavodoxin] + H2O + 2 H(+) = 2-C-methyl-D-erythritol 2,4-cyclic diphosphate + reduced [flavodoxin]. The protein operates within isoprenoid biosynthesis; isopentenyl diphosphate biosynthesis via DXP pathway; isopentenyl diphosphate from 1-deoxy-D-xylulose 5-phosphate: step 5/6. Functionally, converts 2C-methyl-D-erythritol 2,4-cyclodiphosphate (ME-2,4cPP) into 1-hydroxy-2-methyl-2-(E)-butenyl 4-diphosphate. The polypeptide is 4-hydroxy-3-methylbut-2-en-1-yl diphosphate synthase (flavodoxin) (Salmonella gallinarum (strain 287/91 / NCTC 13346)).